The chain runs to 544 residues: Chaperonin GroEL (544 aa).

ATP-binding positions include 29–32 (TLGP), 86–90 (DGTTT), Gly413, 476–478 (NAA), and Asp492.

This sequence belongs to the chaperonin (HSP60) family. In terms of assembly, forms a cylinder of 14 subunits composed of two heptameric rings stacked back-to-back. Interacts with the co-chaperonin GroES.

The protein resides in the cytoplasm. It carries out the reaction ATP + H2O + a folded polypeptide = ADP + phosphate + an unfolded polypeptide.. Functionally, together with its co-chaperonin GroES, plays an essential role in assisting protein folding. The GroEL-GroES system forms a nano-cage that allows encapsulation of the non-native substrate proteins and provides a physical environment optimized to promote and accelerate protein folding. The polypeptide is Chaperonin GroEL (Bacillus licheniformis (strain ATCC 14580 / DSM 13 / JCM 2505 / CCUG 7422 / NBRC 12200 / NCIMB 9375 / NCTC 10341 / NRRL NRS-1264 / Gibson 46)).